A 91-amino-acid chain; its full sequence is UPF0386 protein Caul_4643 (91 aa).

This sequence belongs to the UPF0386 family.

This chain is UPF0386 protein Caul_4643, found in Caulobacter sp. (strain K31).